The sequence spans 98 residues: Large ribosomal subunit protein bL28 (98 aa).

Belongs to the bacterial ribosomal protein bL28 family.

This Mesorhizobium japonicum (strain LMG 29417 / CECT 9101 / MAFF 303099) (Mesorhizobium loti (strain MAFF 303099)) protein is Large ribosomal subunit protein bL28.